Consider the following 316-residue polypeptide: Pantothenate kinase (316 aa).

Gly95–Ser102 contacts ATP.

This sequence belongs to the prokaryotic pantothenate kinase family.

The protein localises to the cytoplasm. The enzyme catalyses (R)-pantothenate + ATP = (R)-4'-phosphopantothenate + ADP + H(+). Its pathway is cofactor biosynthesis; coenzyme A biosynthesis; CoA from (R)-pantothenate: step 1/5. This is Pantothenate kinase (coaA) from Halalkalibacterium halodurans (strain ATCC BAA-125 / DSM 18197 / FERM 7344 / JCM 9153 / C-125) (Bacillus halodurans).